Consider the following 734-residue polypeptide: MRFSDSIEAGIYEPWRDKYMNYPELKHLLKTEEEAPSWGENDESKFVSVMDAQLEKVYAFHLEILKELNESVDWVKSKVSASQEPDGPPISKEEAIKLLERLDSCTETVKKLEKYTRLNLTGFFKIVKKHDKLYPGYSLRPVFQVRLRACPLGSVQFNPLLAEIFSLYNTLRDGLSAPSNSVQVKPKHEHNVDYNSSMYRRRTFRFWVHPDNVMEVKTYIMRHLPVLYYSGKQGFDKDQNGVSGILDPISTCLYLDNSNFDLYSQNLERSEQAYSLRLHWYGKLTPKTDIIVERMVRQGSTLSHSEDRFTIREKKVRELLSGRYDFRKVEDDHSTTASDQKKKLIEDVEQLIVDNHLQPVLRSVYTRTAFQIPGDDEVRINLDSDWVMIREDSLDIERPCRDPEDWHRHDIDDADFPYKHLRKGEYSRFPYSVLEIRECVRYDEDEPLWISELRNSHLISEIDGFSKYEHGVAILFEKYVSLLPMWVFSMDQDIRKDLQEVYSHPEGSAGSRNVYIKRRNQRVLKQNMTPEPSQPSPLVNRLKANEMHPVSEEPEDNREVYRNEHGDHFNFRSIPGLLKPSTYGSFKHHGKTFVTPPHIKKPEIPLRVSGPIKVEAKVWLANERTFLKWLHVVVLLGSLALALYNSAGERLGQAFGVVYTLLAIFIGFYAWKLHAKRSQMIKSRSPAPMTDYWGPLIVGTALAISLIVNMSFALKDAVYQNLIEPDRLLVKLFT.

Residues 1–144 (MRFSDSIEAG…PGYSLRPVFQ (144 aa)) form the SPX domain. The Cytoplasmic segment spans residues 1 to 624 (MRFSDSIEAG…EAKVWLANER (624 aa)). Residues 125–132 (KIVKKHDK) form an important for inositol polyphosphate binding region. The residue at position 181 (serine 181) is a Phosphoserine. Threonine 529 is subject to Phosphothreonine. Residue tyrosine 583 is modified to Phosphotyrosine. Residues 625 to 645 (TFLKWLHVVVLLGSLALALYN) traverse the membrane as a helical segment. The Vacuolar portion of the chain corresponds to 646–650 (SAGER). A helical membrane pass occupies residues 651–671 (LGQAFGVVYTLLAIFIGFYAW). Residues 672–693 (KLHAKRSQMIKSRSPAPMTDYW) lie on the Cytoplasmic side of the membrane. Residues 694–714 (GPLIVGTALAISLIVNMSFAL) form a helical membrane-spanning segment. Topologically, residues 715–734 (KDAVYQNLIEPDRLLVKLFT) are vacuolar.

The protein belongs to the VTC2/3 family. As to quaternary structure, the VTC core complex is an integral membrane heterooligomer composed of at least the catalytic subunit vtc4 and the accessory subunits vtc1 and vtc2. vtc1 is a small membrane protein without hydrophilic domain. Vtc2 and vtc4 are related and have 2 hydrophilic domains that face the cytosol, an N-terminal SPX domain and the central core domain. The central core in vtc4 is the catalytic domain.

It localises to the vacuole membrane. Accessory subunit of the vacuolar transporter chaperone (VTC) complex. The VTC complex acts as a vacuolar polyphosphate polymerase that catalyzes the synthesis of inorganic polyphosphate (polyP) via transfer of phosphate from ATP to a growing polyP chain, releasing ADP. VTC exposes its catalytic domain vtc4 to the cytosol, where the growing polyP chain winds through a tunnel-shaped pocket, integrating cytoplasmic polymer synthesis with polyP membrane translocation. The VTC complex carries 9 vacuolar transmembrane domains, which are likely to constitute the translocation channel into the organelle lumen. PolyP synthesis is tightly coupled to its transport into the vacuole lumen, in order to avoid otherwise toxic intermediates in the cytosol, and it depends on the proton gradient across the membrane, formed by V-ATPase. The VTC complex also plays a role in vacuolar membrane fusion. This chain is Vacuolar transporter chaperone complex subunit 2 (vtc2), found in Schizosaccharomyces pombe (strain 972 / ATCC 24843) (Fission yeast).